A 652-amino-acid chain; its full sequence is Phosphomethylpyrimidine synthase (652 aa).

Substrate-binding positions include Asn-257, Met-286, Tyr-315, His-351, 371–373, 412–415, and Glu-451; these read SRG and DGLR. His-455 is a binding site for Zn(2+). A substrate-binding site is contributed by Tyr-478. Zn(2+) is bound at residue His-519. Residues Cys-599, Cys-602, and Cys-607 each contribute to the [4Fe-4S] cluster site.

The protein belongs to the ThiC family. Homodimer. [4Fe-4S] cluster is required as a cofactor.

It carries out the reaction 5-amino-1-(5-phospho-beta-D-ribosyl)imidazole + S-adenosyl-L-methionine = 4-amino-2-methyl-5-(phosphooxymethyl)pyrimidine + CO + 5'-deoxyadenosine + formate + L-methionine + 3 H(+). Its pathway is cofactor biosynthesis; thiamine diphosphate biosynthesis. In terms of biological role, catalyzes the synthesis of the hydroxymethylpyrimidine phosphate (HMP-P) moiety of thiamine from aminoimidazole ribotide (AIR) in a radical S-adenosyl-L-methionine (SAM)-dependent reaction. In Thiobacillus denitrificans (strain ATCC 25259 / T1), this protein is Phosphomethylpyrimidine synthase.